Reading from the N-terminus, the 679-residue chain is Methionine--tRNA ligase (679 aa).

The short motif at 14 to 24 (PYANGSIHLGH) is the 'HIGH' region element. Zn(2+)-binding residues include Cys145, Cys148, Cys158, and Cys161. Positions 331–335 (KMSKS) match the 'KMSKS' region motif. Lys334 contributes to the ATP binding site. Positions 577–679 (TFAAVDLRVA…SGAKPGQRIK (103 aa)) constitute a tRNA-binding domain.

It belongs to the class-I aminoacyl-tRNA synthetase family. MetG type 1 subfamily. As to quaternary structure, homodimer. Zn(2+) is required as a cofactor.

The protein localises to the cytoplasm. The catalysed reaction is tRNA(Met) + L-methionine + ATP = L-methionyl-tRNA(Met) + AMP + diphosphate. Its function is as follows. Is required not only for elongation of protein synthesis but also for the initiation of all mRNA translation through initiator tRNA(fMet) aminoacylation. The sequence is that of Methionine--tRNA ligase from Pseudomonas putida (strain GB-1).